A 107-amino-acid chain; its full sequence is Homeobox protein HD-3 (107 aa).

The homeobox DNA-binding region spans 6–65; sequence SKAPRTRMTAGQTRVLMSFFKDNPFPSTTAREKLSKVLGVGPRTVQIWFQNQRQKARGQA.

Its subcellular location is the nucleus. The chain is Homeobox protein HD-3 (HD-3) from Encephalitozoon cuniculi (strain GB-M1) (Microsporidian parasite).